The following is a 641-amino-acid chain: Epithelial sodium channel subunit beta (641 aa).

The Cytoplasmic portion of the chain corresponds to 1–50 (MHLKKYLLKGLHRLQKGPGYSYKELLVWYCNNTNTHGPKRIICEGPKKKA). The chain crosses the membrane as a helical span at residues 51–71 (MWFLITLLFTSLVCWQWGVFI). Residues 72-533 (RTYLSWEVSV…GGQFGFWMGG (462 aa)) lie on the Extracellular side of the membrane. 9 disulfide bridges follow: C98–C273, C185–C190, C197–C204, C250–C257, C362–C449, C387–C445, C391–C441, C400–C427, and C402–C416. N141 carries N-linked (GlcNAc...) asparagine glycosylation. N261 carries N-linked (GlcNAc...) asparagine glycosylation. A helical membrane pass occupies residues 534 to 554 (SVLCLIEFGEILIDFVWITII). Over 555–641 (KLVAFAKSLR…IESDSEGDAI (87 aa)) the chain is Cytoplasmic. Residues 593–624 (PDVARPGPDPGTYPDEQTLPIPGTPPPNYDSL) are disordered. A PY motif; recruits WW domain-containing proteins and is thereby required for ubiquitination and inhibition of the channel by NEDD4 and NEDD4L motif is present at residues 617 to 621 (PPPNY). 2 positions are modified to phosphoserine: S634 and S636.

It belongs to the amiloride-sensitive sodium channel (TC 1.A.6) family. SCNN1B subfamily. In terms of assembly, component of the heterotrimeric epithelial sodium channel (ENaC) composed of an alpha/SCNN1A, a beta/SCNN1B and a gamma/SCNN1G subunit. An additional delta/SCNN1D subunit can replace the alpha/SCNN1A subunit to form an alternative channel with specific properties. Interacts with WWP1 (via WW domains). Interacts with WWP2 (via WW domains); inhibits the channel. Interacts with the full-length immature form of PCSK9 (pro-PCSK9). Interacts (N-glycosylated) with BPIFA1; the interaction is direct and inhibits the proteolytic processing of SCNN1A and SCNN1G and the activation of ENaC. Post-translationally, ubiquitinated. Can be ubiquitinated at multiple sites and undergo monoubiquitination and polyubiquitination. Ubiquitination by NEDD4 or NEDD4L inhibits the ENaC channel through endocytosis, intracellular retention and degradation of its individual subunits. However, some studies could not confirm the ubiquitination of this subunit of the ENaC. In terms of processing, phosphorylated on serine and threonine residues. Aldosterone and insulin increase the basal level of phosphorylation. N-glycosylated. N-glycosylation is required for interaction with BPIFA1.

It is found in the apical cell membrane. It localises to the cytoplasmic vesicle membrane. It catalyses the reaction Na(+)(in) = Na(+)(out). Its activity is regulated as follows. Originally identified and characterized by its inhibition by the diuretic drug amiloride. Its function is as follows. This is one of the three pore-forming subunits of the heterotrimeric epithelial sodium channel (ENaC), a critical regulator of sodium balance and fluid homeostasis. ENaC operates in epithelial tissues, where it mediates the electrodiffusion of sodium ions from extracellular fluid through the apical membrane of cells, with water following osmotically. It plays a key role in maintaining sodium homeostasis through electrogenic sodium reabsorption in the kidneys. Additionally, ENaC is essential for airway surface liquid homeostasis, which is crucial for proper mucus clearance. The chain is Epithelial sodium channel subunit beta from Canis lupus familiaris (Dog).